A 209-amino-acid polypeptide reads, in one-letter code: uncharacterized protein (209 aa).

This is an uncharacterized protein from Orgyia pseudotsugata (Douglas-fir tussock moth).